The chain runs to 138 residues: Nucleoside diphosphate kinase (138 aa).

Lysine 9, phenylalanine 57, arginine 85, threonine 91, arginine 102, and asparagine 112 together coordinate ATP. The active-site Pros-phosphohistidine intermediate is histidine 115.

Belongs to the NDK family. Requires Mg(2+) as cofactor.

It is found in the cytoplasm. It carries out the reaction a 2'-deoxyribonucleoside 5'-diphosphate + ATP = a 2'-deoxyribonucleoside 5'-triphosphate + ADP. The enzyme catalyses a ribonucleoside 5'-diphosphate + ATP = a ribonucleoside 5'-triphosphate + ADP. In terms of biological role, major role in the synthesis of nucleoside triphosphates other than ATP. The ATP gamma phosphate is transferred to the NDP beta phosphate via a ping-pong mechanism, using a phosphorylated active-site intermediate. In Picrophilus torridus (strain ATCC 700027 / DSM 9790 / JCM 10055 / NBRC 100828 / KAW 2/3), this protein is Nucleoside diphosphate kinase.